We begin with the raw amino-acid sequence, 218 residues long: Pyridoxal phosphate homeostasis protein (218 aa).

Residue Lys-25 is modified to N6-(pyridoxal phosphate)lysine.

It belongs to the pyridoxal phosphate-binding protein YggS/PROSC family.

Its function is as follows. Pyridoxal 5'-phosphate (PLP)-binding protein, which is involved in PLP homeostasis. This is Pyridoxal phosphate homeostasis protein from Synechocystis sp. (strain ATCC 27184 / PCC 6803 / Kazusa).